A 113-amino-acid chain; its full sequence is Nucleoid-associated protein Syncc9902_0023 (113 aa).

It belongs to the YbaB/EbfC family. In terms of assembly, homodimer.

It is found in the cytoplasm. The protein resides in the nucleoid. Functionally, binds to DNA and alters its conformation. May be involved in regulation of gene expression, nucleoid organization and DNA protection. This is Nucleoid-associated protein Syncc9902_0023 from Synechococcus sp. (strain CC9902).